We begin with the raw amino-acid sequence, 235 residues long: uncharacterized protein (235 aa).

2 disordered regions span residues methionine 1–asparagine 47 and glutamine 78–glutamine 128. The span at histidine 20–proline 33 shows a compositional bias: polar residues. Residues glutamine 84–serine 98 show a composition bias toward low complexity. Positions valine 106–glutamine 128 are enriched in polar residues.

This is an uncharacterized protein from Saccharomyces cerevisiae (strain ATCC 204508 / S288c) (Baker's yeast).